Consider the following 108-residue polypeptide: uncharacterized protein (108 aa).

Residues 25-45 form a helical membrane-spanning segment; the sequence is VILKSFLLISSWVILVLLLVI.

It is found in the membrane. This is an uncharacterized protein from Saccharomyces cerevisiae (strain ATCC 204508 / S288c) (Baker's yeast).